A 288-amino-acid chain; its full sequence is MAAKIIDGKTIAQQVRSEVAQKVQARIAAGLRAPGLAVVLVGSNPASQIYVASKRKACEEVGFVSRSYDLPETTSEAELLELIDALNADNTIDGILVQLPLPAGIDNVKVLERIHPDKDVDGFHPYNVGRLCQRAPRLRPCTPRGIVTLLERYNIDTFGLNAVVIGASNIVGRPMSMELLLAGCTTTVTHRFTKNLRHHVENADLLIVAVGKPGFIPGDWIKEGAIVIDVGINRLENGKVVGDVVFEDAAKHASYITPVPGGVGPMTVATLIENTLQACVEYHDPQDE.

NADP(+) contacts are provided by residues 166–168 (GAS) and Ile-232.

The protein belongs to the tetrahydrofolate dehydrogenase/cyclohydrolase family. In terms of assembly, homodimer.

It catalyses the reaction (6R)-5,10-methylene-5,6,7,8-tetrahydrofolate + NADP(+) = (6R)-5,10-methenyltetrahydrofolate + NADPH. It carries out the reaction (6R)-5,10-methenyltetrahydrofolate + H2O = (6R)-10-formyltetrahydrofolate + H(+). It functions in the pathway one-carbon metabolism; tetrahydrofolate interconversion. Its function is as follows. Catalyzes the oxidation of 5,10-methylenetetrahydrofolate to 5,10-methenyltetrahydrofolate and then the hydrolysis of 5,10-methenyltetrahydrofolate to 10-formyltetrahydrofolate. This Shigella dysenteriae serotype 1 (strain Sd197) protein is Bifunctional protein FolD.